Reading from the N-terminus, the 476-residue chain is Adenosylhomocysteinase (476 aa).

Thr61, Asp140, and Glu200 together coordinate substrate. An NAD(+)-binding site is contributed by 201–203 (TTT). Lys230 and Asp234 together coordinate substrate. NAD(+) is bound by residues Asn235, 264–269 (GYGDVG), Glu287, Asn322, 343–345 (IGH), and Asn389.

It belongs to the adenosylhomocysteinase family. Requires NAD(+) as cofactor.

The protein localises to the cytoplasm. It carries out the reaction S-adenosyl-L-homocysteine + H2O = L-homocysteine + adenosine. Its pathway is amino-acid biosynthesis; L-homocysteine biosynthesis; L-homocysteine from S-adenosyl-L-homocysteine: step 1/1. May play a key role in the regulation of the intracellular concentration of adenosylhomocysteine. The polypeptide is Adenosylhomocysteinase (Acidovorax ebreus (strain TPSY) (Diaphorobacter sp. (strain TPSY))).